We begin with the raw amino-acid sequence, 518 residues long: Protease Do-like 4, mitochondrial (518 aa).

The transit peptide at Met-1–Phe-23 directs the protein to the mitochondrion. Residues Glu-98 to Leu-262 are serine protease. Catalysis depends on charge relay system residues His-116, Asp-147, and Ser-225. Residues Asp-278 to Glu-358 enclose the PDZ domain.

This sequence belongs to the peptidase S1C family.

The protein localises to the mitochondrion membrane. Its function is as follows. Putative serine protease. This Arabidopsis thaliana (Mouse-ear cress) protein is Protease Do-like 4, mitochondrial (DEGP4).